The primary structure comprises 76 residues: cAMP-dependent protein kinase inhibitor alpha (76 aa).

Threonine 2 bears the N-acetylthreonine mark. Residues 49 to 76 (KTEGEDDGQRSSTEQSGEAQGEAAKSES) are disordered.

This sequence belongs to the PKI family. Present at high levels in skeletal muscle and brain but is present at lower levels in heart, testis and liver.

Its function is as follows. Extremely potent competitive inhibitor of cAMP-dependent protein kinase activity, this protein interacts with the catalytic subunit of the enzyme after the cAMP-induced dissociation of its regulatory chains. The polypeptide is cAMP-dependent protein kinase inhibitor alpha (Pkia) (Mus musculus (Mouse)).